We begin with the raw amino-acid sequence, 334 residues long: S-adenosylmethionine decarboxylase proenzyme 2 (334 aa).

Phenylalanine 7 is a binding site for substrate. Active-site residues include glutamate 8 and glutamate 11. Glutamate 67 provides a ligand contact to substrate. The Schiff-base intermediate with substrate; via pyruvic acid role is filled by serine 68. Pyruvic acid (Ser); by autocatalysis is present on serine 68. Cysteine 82 functions as the Proton donor; for catalytic activity in the catalytic mechanism. Residue phenylalanine 223 participates in substrate binding. Residues serine 229 and histidine 243 each act as proton acceptor; for processing activity in the active site. Glutamate 247 is a binding site for substrate. Serine 298 is subject to Phosphoserine.

It belongs to the eukaryotic AdoMetDC family. In terms of assembly, heterotetramer of two alpha and two beta chains. It depends on pyruvate as a cofactor. Is synthesized initially as an inactive proenzyme. Formation of the active enzyme involves a self-maturation process in which the active site pyruvoyl group is generated from an internal serine residue via an autocatalytic post-translational modification. Two non-identical subunits are generated from the proenzyme in this reaction, and the pyruvate is formed at the N-terminus of the alpha chain, which is derived from the carboxyl end of the proenzyme. The post-translation cleavage follows an unusual pathway, termed non-hydrolytic serinolysis, in which the side chain hydroxyl group of the serine supplies its oxygen atom to form the C-terminus of the beta chain, while the remainder of the serine residue undergoes an oxidative deamination to produce ammonia and the pyruvoyl group blocking the N-terminus of the alpha chain.

It catalyses the reaction S-adenosyl-L-methionine + H(+) = S-adenosyl 3-(methylsulfanyl)propylamine + CO2. Its pathway is amine and polyamine biosynthesis; S-adenosylmethioninamine biosynthesis; S-adenosylmethioninamine from S-adenosyl-L-methionine: step 1/1. In terms of biological role, essential for biosynthesis of the polyamines spermidine and spermine. Promotes maintenance and self-renewal of embryonic stem cells, by maintaining spermine levels. In Mus spretus (Western Mediterranean mouse), this protein is S-adenosylmethionine decarboxylase proenzyme 2 (Amd2).